The sequence spans 301 residues: Glycine--tRNA ligase alpha subunit (301 aa).

Belongs to the class-II aminoacyl-tRNA synthetase family. As to quaternary structure, tetramer of two alpha and two beta subunits.

The protein localises to the cytoplasm. It carries out the reaction tRNA(Gly) + glycine + ATP = glycyl-tRNA(Gly) + AMP + diphosphate. This is Glycine--tRNA ligase alpha subunit from Shewanella loihica (strain ATCC BAA-1088 / PV-4).